Here is an 81-residue protein sequence, read N- to C-terminus: Small cysteine-rich protein 1 1 (81 aa).

Residues 1–19 form the signal peptide; that stretch reads MGVHFNICLLLLLVATISS. Positions 20–39 are excised as a propeptide; the sequence is QTLKATEKDDSTDENPFGIY.

The protein belongs to the Cnidaria small cysteine-rich protein (SCRiP) family. alpha subfamily. In terms of processing, the basic myotoxic domain of rattlesnake crotamine toxins (with 6 Cys residues) has been detected in this protein. However, this protein contains 2 additional Cys at the C-terminal region. Hence, this protein may contain 4 disulfide bonds instead of the 3 suggested by the myotoxin domain.

It is found in the secreted. Its subcellular location is the nematocyst. In terms of biological role, induces neurotoxic symptoms on zebrafish. Has also been claimed to be implied in calcification, but tests on homolog proteins suggest that proteins of this family have a neurotoxic function and not a calcification function. The sequence is that of Small cysteine-rich protein 1 1 from Montipora capitata (Rice coral).